The sequence spans 789 residues: Ribosomal protein S6 kinase alpha-5 (789 aa).

The 270-residue stretch at F39 to F308 folds into the Protein kinase 1 domain. ATP-binding positions include L45 to V53 and K71. The active-site Proton acceptor is the D167. The residue at position 202 (S202) is a Phosphoserine; by autocatalysis. The AGC-kinase C-terminal domain occupies Q309–N377. S350 carries the post-translational modification Phosphoserine. A phosphoserine; by autocatalysis mark is found at S366 and S371. Residues D416 to L677 form the Protein kinase 2 domain. ATP is bound by residues L422 to C430 and K445. The active-site Proton acceptor is the D534. A phosphothreonine mark is found at T571 and T690. The segment at A731–D789 is disordered. Residues T739 to T769 show a composition bias toward low complexity. S740, S742, and S748 each carry phosphoserine; by autocatalysis. The segment covering L770–D789 has biased composition (polar residues).

It belongs to the protein kinase superfamily. AGC Ser/Thr protein kinase family. S6 kinase subfamily. Mg(2+) is required as a cofactor. Ser-366 and Thr-571 phosphorylation is required for kinase activity. Ser-366 and Ser-202 are autophosphorylated by the C-terminal kinase domain, and their phosphorylation is essential for the catalytic activity of the N-terminal kinase domain. Phosphorylated at Ser-350, Thr-571 and Thr-690 by MAP kinases. Autophosphorylated at Ser-740, Ser-742 and Ser-748 by the N-terminal kinase domain. In terms of tissue distribution, widely expressed with high levels in heart, brain and placenta. Less abundant in lung, kidney and liver.

It localises to the nucleus. The enzyme catalyses L-seryl-[protein] + ATP = O-phospho-L-seryl-[protein] + ADP + H(+). The catalysed reaction is L-threonyl-[protein] + ATP = O-phospho-L-threonyl-[protein] + ADP + H(+). Its activity is regulated as follows. Activated by phosphorylation at Ser-350, Thr-571 and Thr-690 by MAP kinases, and by further autophosphorylation of Ser-202, Ser-366 and Ser-371 by the activated C-terminal kinase domain. The active N-terminal kinase domain finally phosphorylates downstream substrates, as well as Ser-740, Ser-742 and Ser-748 in its own C-terminal region. Serine/threonine-protein kinase that is required for the mitogen or stress-induced phosphorylation of the transcription factors CREB1 and ATF1 and that contributes to gene activation by histone phosphorylation. Phosphorylates CREB1 and ATF1 in response to mitogenic or stress stimuli such as UV-C irradiation, epidermal growth factor (EGF) and anisomycin. Directly represses transcription via phosphorylation of 'Ser-1' of histone H2A. Phosphorylates 'Ser-10' of histone H3 in response to mitogenics, stress stimuli and EGF, which results in the transcriptional activation of several immediate early genes, including proto-oncogenes c-fos/FOS and c-jun/JUN. May also phosphorylate 'Ser-28' of histone H3. Mediates the mitogen- and stress-induced phosphorylation of high mobility group protein 1 (HMGN1/HMG14). In Gallus gallus (Chicken), this protein is Ribosomal protein S6 kinase alpha-5 (RPS6KA5).